A 173-amino-acid polypeptide reads, in one-letter code: Invasion protein B homolog BruAb1_0366 (173 aa).

The N-terminal stretch at 1 to 23 (MKNYRAIGLAFTFTALSSLSAFA) is a signal peptide.

This sequence belongs to the IalB family.

This is Invasion protein B homolog BruAb1_0366 from Brucella abortus biovar 1 (strain 9-941).